Consider the following 310-residue polypeptide: Aspartate carbamoyltransferase catalytic subunit 1 (310 aa).

2 residues coordinate carbamoyl phosphate: arginine 55 and threonine 56. Residue lysine 85 participates in L-aspartate binding. The carbamoyl phosphate site is built by arginine 106, histidine 134, and glutamine 137. Residues arginine 167 and arginine 228 each coordinate L-aspartate. Carbamoyl phosphate contacts are provided by leucine 266 and proline 267.

It belongs to the aspartate/ornithine carbamoyltransferase superfamily. ATCase family. Heterododecamer (2C3:3R2) of six catalytic PyrB chains organized as two trimers (C3), and six regulatory PyrI chains organized as three dimers (R2).

It carries out the reaction carbamoyl phosphate + L-aspartate = N-carbamoyl-L-aspartate + phosphate + H(+). It participates in pyrimidine metabolism; UMP biosynthesis via de novo pathway; (S)-dihydroorotate from bicarbonate: step 2/3. Catalyzes the condensation of carbamoyl phosphate and aspartate to form carbamoyl aspartate and inorganic phosphate, the committed step in the de novo pyrimidine nucleotide biosynthesis pathway. The sequence is that of Aspartate carbamoyltransferase catalytic subunit 1 from Shewanella halifaxensis (strain HAW-EB4).